Reading from the N-terminus, the 173-residue chain is Peptidoglycan-associated lipoprotein (173 aa).

Positions 1–21 are cleaved as a signal peptide; sequence MQLNKVLKGLMIALPVMAIAA. Cys22 carries the N-palmitoyl cysteine lipid modification. Cys22 carries S-diacylglycerol cysteine lipidation. The interval 30–58 is disordered; that stretch reads NDGSEGMLGAGTGMDANGGNGNMSSEEQA. A compositionally biased stretch (gly residues) spans 35-50; the sequence is GMLGAGTGMDANGGNG. Positions 60 to 173 constitute an OmpA-like domain; that stretch reads LQMQQLQQNN…SKNRRAVLVY (114 aa).

This sequence belongs to the Pal lipoprotein family. As to quaternary structure, the Tol-Pal system is composed of five core proteins: the inner membrane proteins TolA, TolQ and TolR, the periplasmic protein TolB and the outer membrane protein Pal. They form a network linking the inner and outer membranes and the peptidoglycan layer.

Its subcellular location is the cell outer membrane. In terms of biological role, part of the Tol-Pal system, which plays a role in outer membrane invagination during cell division and is important for maintaining outer membrane integrity. This Escherichia coli O157:H7 protein is Peptidoglycan-associated lipoprotein.